Here is a 517-residue protein sequence, read N- to C-terminus: 2-isopropylmalate synthase (517 aa).

The Pyruvate carboxyltransferase domain maps to 5–268; the sequence is IIIFDTTLRD…DTRINTQEIH (264 aa). 4 residues coordinate Mn(2+): Asp-14, His-202, His-204, and Asn-238. The segment at 393–517 is regulatory domain; sequence SLDVITSQTI…ADLKSHKISQ (125 aa).

The protein belongs to the alpha-IPM synthase/homocitrate synthase family. LeuA type 1 subfamily. As to quaternary structure, homodimer. The cofactor is Mn(2+).

Its subcellular location is the cytoplasm. The enzyme catalyses 3-methyl-2-oxobutanoate + acetyl-CoA + H2O = (2S)-2-isopropylmalate + CoA + H(+). The protein operates within amino-acid biosynthesis; L-leucine biosynthesis; L-leucine from 3-methyl-2-oxobutanoate: step 1/4. Functionally, catalyzes the condensation of the acetyl group of acetyl-CoA with 3-methyl-2-oxobutanoate (2-ketoisovalerate) to form 3-carboxy-3-hydroxy-4-methylpentanoate (2-isopropylmalate). The sequence is that of 2-isopropylmalate synthase from Histophilus somni (strain 2336) (Haemophilus somnus).